A 299-amino-acid polypeptide reads, in one-letter code: GTPase Era (299 aa).

Positions 4 to 171 (KSGFVAILGR…ISLLTDNLEE (168 aa)) constitute an Era-type G domain. Residues 12-19 (GRPNVGKS) are G1. GTP is bound at residue 12-19 (GRPNVGKS). Residues 38 to 42 (QTTRN) form a G2 region. Residues 59 to 62 (DTPG) are G3. Residues 59 to 63 (DTPGI) and 121 to 124 (NKID) each bind GTP. A G4 region spans residues 121-124 (NKID). Residues 150–152 (ISA) form a G5 region. Positions 202–280 (TQQEIPHSVA…YLETWVKVKK (79 aa)) constitute a KH type-2 domain.

Belongs to the TRAFAC class TrmE-Era-EngA-EngB-Septin-like GTPase superfamily. Era GTPase family. As to quaternary structure, monomer.

Its subcellular location is the cytoplasm. The protein resides in the cell membrane. An essential GTPase that binds both GDP and GTP, with rapid nucleotide exchange. Plays a role in 16S rRNA processing and 30S ribosomal subunit biogenesis and possibly also in cell cycle regulation and energy metabolism. In Streptococcus uberis (strain ATCC BAA-854 / 0140J), this protein is GTPase Era.